An 800-amino-acid chain; its full sequence is Protein gfi-3 (800 aa).

The stretch at 346 to 366 forms a coiled coil; the sequence is ESLQQAQLRNDEICHQMANIE. TPR repeat units lie at residues 526 to 559 and 637 to 670; these read AIGAVNLSYSQAGVGNYDAALRTIEEMRQNYPEE and IRIHMQTGCIYTASQEFRKAAREFADALSLAENT.

In terms of assembly, the APC/C complex is probably composed of at least 12 subunits: apc-2, apc-10, apc-11, cdc-26, emb-1, emb-27, emb-30, mat-1, mat-2, mat-3, such-1 and gfi-3. Expressed in gut cells and mature sperm stored in the spermatheca.

The protein operates within protein modification; protein ubiquitination. Its function is as follows. Probable component of the anaphase promoting complex/cyclosome (APC/C), a cell cycle-regulated E3 ubiquitin ligase that controls progression through mitosis and the G1 phase of the cell cycle. The APC/C complex acts by mediating ubiquitination and subsequent degradation of target proteins. Required for the metaphase to anaphase transition in meiosis. This chain is Protein gfi-3, found in Caenorhabditis elegans.